The following is a 125-amino-acid chain: MKSLYVAFGGALGAVSRYVISKFINSSFSFSFVPWGTIFVNVVGSFLLSFLMFLSISKTDISQSFILFFGTGFLGAFTTFSTFAYEFLSIFLTQPLRAIIYFIANIFLGFFAAILGMFLGRGRIL.

3 helical membrane-spanning segments follow: residues 36-56 (GTIFVNVVGSFLLSFLMFLSI), 65-85 (FILFFGTGFLGAFTTFSTFAY), and 99-119 (IIYFIANIFLGFFAAILGMFL). Positions 75 and 78 each coordinate Na(+).

It belongs to the fluoride channel Fluc/FEX (TC 1.A.43) family.

It is found in the cell inner membrane. It catalyses the reaction fluoride(in) = fluoride(out). Na(+) is not transported, but it plays an essential structural role and its presence is essential for fluoride channel function. Functionally, fluoride-specific ion channel. Important for reducing fluoride concentration in the cell, thus reducing its toxicity. The sequence is that of Fluoride-specific ion channel FluC from Thermosipho africanus (strain TCF52B).